A 1863-amino-acid chain; its full sequence is 5'-3' DNA helicase ZGRF1 (1863 aa).

Disordered stretches follow at residues 78 to 110 (SRAV…QPSG), 132 to 196 (ENSE…PLSL), and 300 to 349 (TQSI…PEAQ). The segment covering 81–90 (VEPDGSREAL) has biased composition (basic and acidic residues). Low complexity predominate over residues 92-105 (SGSRTLVSSSRSLG). 2 stretches are compositionally biased toward polar residues: residues 173-185 (PVST…ITFS) and 300-321 (TQSI…TTSR). Phosphoserine is present on residues serine 331 and serine 445. 3 disordered regions span residues 460-496 (PVSP…SKSN), 524-545 (TSDT…ERWE), and 610-664 (GDVK…GVSP). Residues 533 to 545 (EDSRLSQDSERWE) are compositionally biased toward basic and acidic residues. Zn(2+)-binding residues include cysteine 1111, histidine 1113, cysteine 1136, and cysteine 1144. The segment at 1111 to 1153 (CHHNQPAKLVMVKKEGPNKGRLFYTCDKSKDNQCKFFKWLEEV) adopts a GRF-type zinc-finger fold.

In terms of assembly, interacts with DNA repair protein RAD51; the interaction promotes RAD51 strand exchange activity. Also interacts with DNA repair proteins EXO1 and BRCA1; the interactions are increased following DNA damage induction.

The protein resides in the nucleus. It carries out the reaction ATP + H2O = ADP + phosphate + H(+). The catalysed reaction is Couples ATP hydrolysis with the unwinding of duplex DNA at the replication fork by translocating in the 5'-3' direction. This creates two antiparallel DNA single strands (ssDNA). The leading ssDNA polymer is the template for DNA polymerase III holoenzyme which synthesizes a continuous strand.. In terms of biological role, 5'-3' DNA helicase which is recruited to sites of DNA damage and promotes repair of replication-blocking DNA lesions through stimulation of homologous recombination (HR). Promotes HR by directly stimulating RAD51-mediated strand exchange activity. Not required to load RAD51 at sites of DNA damage but promotes recombinational repair after RAD51 recruitment. Also promotes HR by positively regulating EXO1-mediated DNA end resection of DNA double-strand breaks. Required for recruitment of replication protein RPA2 to DNA damage sites. Promotes the initiation of the G2/M checkpoint but not its maintenance. Catalyzes Holliday junction branch migration and dissociation of D-loops and DNA flaps. This Mus musculus (Mouse) protein is 5'-3' DNA helicase ZGRF1 (Zgrf1).